We begin with the raw amino-acid sequence, 485 residues long: Sulfate adenylyltransferase subunit 1 (485 aa).

In terms of domain architecture, tr-type G spans 30-243 (KGLLRFLTCG…ELLETIDTQR (214 aa)). The G1 stretch occupies residues 39–46 (GSVDDGKS). 39–46 (GSVDDGKS) contributes to the GTP binding site. Positions 97–101 (GITID) are G2. The tract at residues 118-121 (DTPG) is G3. Residues 118–122 (DTPGH) and 173–176 (NKMD) contribute to the GTP site. The segment at 173–176 (NKMD) is G4. The tract at residues 210–212 (SAL) is G5.

The protein belongs to the TRAFAC class translation factor GTPase superfamily. Classic translation factor GTPase family. CysN/NodQ subfamily. In terms of assembly, heterodimer composed of CysD, the smaller subunit, and CysN.

The enzyme catalyses sulfate + ATP + H(+) = adenosine 5'-phosphosulfate + diphosphate. The protein operates within sulfur metabolism; hydrogen sulfide biosynthesis; sulfite from sulfate: step 1/3. Functionally, with CysD forms the ATP sulfurylase (ATPS) that catalyzes the adenylation of sulfate producing adenosine 5'-phosphosulfate (APS) and diphosphate, the first enzymatic step in sulfur assimilation pathway. APS synthesis involves the formation of a high-energy phosphoric-sulfuric acid anhydride bond driven by GTP hydrolysis by CysN coupled to ATP hydrolysis by CysD. This is Sulfate adenylyltransferase subunit 1 from Shewanella oneidensis (strain ATCC 700550 / JCM 31522 / CIP 106686 / LMG 19005 / NCIMB 14063 / MR-1).